A 194-amino-acid polypeptide reads, in one-letter code: Inosine triphosphate pyrophosphatase (194 aa).

ITP is bound at residue 10–15 (TGNANK). Residue glutamate 41 participates in Mg(2+) binding. Residues lysine 54, 72-73 (DT), lysine 89, 147-150 (FGWD), lysine 172, and 177-178 (QR) contribute to the ITP site.

Belongs to the HAM1 NTPase family. Homodimer. The cofactor is Mg(2+). It depends on Mn(2+) as a cofactor.

The protein resides in the cytoplasm. It is found in the nucleus. It carries out the reaction ITP + H2O = IMP + diphosphate + H(+). It catalyses the reaction dITP + H2O = dIMP + diphosphate + H(+). The enzyme catalyses XTP + H2O = XMP + diphosphate + H(+). In terms of biological role, pyrophosphatase that hydrolyzes non-canonical purine nucleotides such as inosine triphosphate (ITP), deoxyinosine triphosphate (dITP) or xanthosine 5'-triphosphate (XTP) to their respective monophosphate derivatives. The enzyme does not distinguish between the deoxy- and ribose forms. Probably excludes non-canonical purines from RNA and DNA precursor pools, thus preventing their incorporation into RNA and DNA and avoiding chromosomal lesions. This chain is Inosine triphosphate pyrophosphatase, found in Kluyveromyces lactis (strain ATCC 8585 / CBS 2359 / DSM 70799 / NBRC 1267 / NRRL Y-1140 / WM37) (Yeast).